The sequence spans 283 residues: Transmembrane protein 45B (283 aa).

Transmembrane regions (helical) follow at residues 7 to 27, 55 to 75, 99 to 119, 121 to 141, 153 to 173, 187 to 207, and 218 to 238; these read HALPGTFFLLFGLWWSIKCPF, LIEGSLKIFFAFVGIMAEQFV, MYLFYGISGIADVLSVSSHHV, VGLDRLFLSLALFVEGFLFYF, IHSLLLFAVFGGSASTMMEVF, LAILQGTWFYQIGFVLYPLSG, and IMFITMCFCWHLAVALLIVGI. The interval 261–283 is disordered; it reads GLRKSTSTDSSSQKALLQESDEE. The segment covering 264–275 has biased composition (polar residues); that stretch reads KSTSTDSSSQKA.

The protein belongs to the TMEM45 family.

Its subcellular location is the membrane. This Danio rerio (Zebrafish) protein is Transmembrane protein 45B (tmem45b).